Here is a 120-residue protein sequence, read N- to C-terminus: Large ribosomal subunit protein uL22 (120 aa).

Belongs to the universal ribosomal protein uL22 family. In terms of assembly, part of the 50S ribosomal subunit.

Functionally, this protein binds specifically to 23S rRNA; its binding is stimulated by other ribosomal proteins, e.g. L4, L17, and L20. It is important during the early stages of 50S assembly. It makes multiple contacts with different domains of the 23S rRNA in the assembled 50S subunit and ribosome. The globular domain of the protein is located near the polypeptide exit tunnel on the outside of the subunit, while an extended beta-hairpin is found that lines the wall of the exit tunnel in the center of the 70S ribosome. The polypeptide is Large ribosomal subunit protein uL22 (Corynebacterium kroppenstedtii (strain DSM 44385 / JCM 11950 / CIP 105744 / CCUG 35717)).